We begin with the raw amino-acid sequence, 130 residues long: Small ribosomal subunit protein uS9 (130 aa).

Residues 111–130 are disordered; the sequence is KERRKYGLKKARKAPQFSKR.

Belongs to the universal ribosomal protein uS9 family.

The sequence is that of Small ribosomal subunit protein uS9 from Thermoanaerobacter sp. (strain X514).